A 189-amino-acid chain; its full sequence is HGPRTase-like protein (189 aa).

This sequence belongs to the purine/pyrimidine phosphoribosyltransferase family. Archaeal HPRT subfamily.

May catalyze a purine salvage reaction, the substrate is unknown. The protein is HGPRTase-like protein of Halorubrum lacusprofundi (strain ATCC 49239 / DSM 5036 / JCM 8891 / ACAM 34).